We begin with the raw amino-acid sequence, 629 residues long: tRNA uridine 5-carboxymethylaminomethyl modification enzyme MnmG (629 aa).

FAD contacts are provided by residues 13–18 (GGGHAG), Val-125, and Ser-180. Position 273-287 (273-287 (GPRYCPSIEDKVMRF)) interacts with NAD(+). Residue Gln-370 coordinates FAD.

Belongs to the MnmG family. Homodimer. Heterotetramer of two MnmE and two MnmG subunits. FAD is required as a cofactor.

It is found in the cytoplasm. In terms of biological role, NAD-binding protein involved in the addition of a carboxymethylaminomethyl (cmnm) group at the wobble position (U34) of certain tRNAs, forming tRNA-cmnm(5)s(2)U34. The chain is tRNA uridine 5-carboxymethylaminomethyl modification enzyme MnmG from Photobacterium profundum (strain SS9).